The chain runs to 240 residues: Putative protein FAM10A4 (240 aa).

The disordered stretch occupies residues 38–94 (MGGTATQKAKSEENTKEEKPDSKVEEDLKADEPSSEESDLEIDKEGVIEPDTDAPQE). A compositionally biased stretch (basic and acidic residues) spans 46-69 (AKSEENTKEEKPDSKVEEDLKADE). A compositionally biased stretch (acidic residues) spans 85 to 94 (IEPDTDAPQE). TPR repeat units lie at residues 110–143 (ANDK…NPRL), 145–177 (ILYA…NPDS), and 179–211 (QPYK…DYDE). A disordered region spans residues 220–240 (VQPRAQKIAEHQRKYERKREE). The span at 226–240 (KIAEHQRKYERKREE) shows a compositional bias: basic and acidic residues.

The protein belongs to the FAM10 family. In terms of tissue distribution, highly expressed in bone marrow and weakly in placenta, pancreas, heart and HeLa cell line.

It localises to the cytoplasm. The chain is Putative protein FAM10A4 (ST13P4) from Homo sapiens (Human).